A 175-amino-acid polypeptide reads, in one-letter code: Apoptosis regulatory protein Siva (175 aa).

The residue at position 34 (Tyr-34) is a Phosphotyrosine; by ABL2. The interaction with BCL2L1 isoform Bcl-x(L) and inhibition of BCL2L1 anti-apoptotic activity stretch occupies residues 36–55; the sequence is QEVFEKTKRLLFLGAQAYLD. Position 70 is a phosphoserine (Ser-70). An interaction with coxsackievirus B3 VP2 region spans residues 105–123; it reads DPSGVASIACSSCVRAVDG.

Binds through its N-terminal region to the C-terminus of CD27 and to PXMP2/PMP22. Binds to the C-terminus of TNFRSF18/GITR. Isoform 1 binds to BCL2L1/BCLX isoform Bcl-x(L) but not to BAX. In terms of assembly, (Microbial infection) Interacts with coxsackievirus B3 capsid protein VP2; this interaction inhibits the binding of SIVA1 to CD27. Requires Zn(2+) as cofactor. Phosphorylated by ABL2/ARG in response to oxidative stress. In terms of tissue distribution, ubiquitous. Mostly expressed in thymus, testis, ovary, prostate, small intestine and spleen and less in colon.

The protein localises to the cytoplasm. It is found in the nucleus. Its function is as follows. Induces CD27-mediated apoptosis. Inhibits BCL2L1 isoform Bcl-x(L) anti-apoptotic activity. Inhibits activation of NF-kappa-B and promotes T-cell receptor-mediated apoptosis. The protein is Apoptosis regulatory protein Siva (SIVA1) of Homo sapiens (Human).